A 723-amino-acid polypeptide reads, in one-letter code: Polyribonucleotide nucleotidyltransferase (723 aa).

Mg(2+) contacts are provided by aspartate 488 and aspartate 494. Positions 555 to 614 (PKIITLNIKPEKIKDVIGPGGKQINAIIDETGVKIDIEQDGTVYIASQDQAMNRKAIAII) constitute a KH domain. One can recognise an S1 motif domain in the interval 624 to 692 (GEVYTGKVRR…QQGRVNLSRK (69 aa)). Residues 692-723 (KALLEKKEQPEGDKKPQAEKKFYPKTKKPESK) are disordered. Positions 693 to 723 (ALLEKKEQPEGDKKPQAEKKFYPKTKKPESK) are enriched in basic and acidic residues.

It belongs to the polyribonucleotide nucleotidyltransferase family. Mg(2+) is required as a cofactor.

The protein resides in the cytoplasm. It carries out the reaction RNA(n+1) + phosphate = RNA(n) + a ribonucleoside 5'-diphosphate. Functionally, involved in mRNA degradation. Catalyzes the phosphorolysis of single-stranded polyribonucleotides processively in the 3'- to 5'-direction. The chain is Polyribonucleotide nucleotidyltransferase from Listeria monocytogenes serovar 1/2a (strain ATCC BAA-679 / EGD-e).